A 532-amino-acid polypeptide reads, in one-letter code: Protoporphyrinogen oxidase (532 aa).

FAD is bound by residues 9–14 (GSGISG), I289, and 511–513 (VGI).

This sequence belongs to the protoporphyrinogen/coproporphyrinogen oxidase family. Protoporphyrinogen oxidase subfamily. It depends on FAD as a cofactor.

It is found in the mitochondrion. The catalysed reaction is protoporphyrinogen IX + 3 O2 = protoporphyrin IX + 3 H2O2. Its pathway is porphyrin-containing compound metabolism; protoporphyrin-IX biosynthesis; protoporphyrin-IX from protoporphyrinogen-IX: step 1/1. In terms of biological role, catalyzes the 6-electron oxidation of protoporphyrinogen-IX to form protoporphyrin-IX. This chain is Protoporphyrinogen oxidase (ppox), found in Dictyostelium discoideum (Social amoeba).